The primary structure comprises 232 residues: Small ribosomal subunit protein uS5 (232 aa).

The tract at residues 1–47 (MAAEVTETAQPVETAASTDNNREQREPRRGGRERNPNRDRGNRDADK) is disordered. Residues 7-19 (ETAQPVETAASTD) are compositionally biased toward polar residues. The span at 20-47 (NNREQREPRRGGRERNPNRDRGNRDADK) shows a compositional bias: basic and acidic residues. An S5 DRBM domain is found at 50–113 (FLERVVTINR…EEAKKNFFRV (64 aa)).

The protein belongs to the universal ribosomal protein uS5 family. Part of the 30S ribosomal subunit. Contacts proteins S4 and S8.

With S4 and S12 plays an important role in translational accuracy. Its function is as follows. Located at the back of the 30S subunit body where it stabilizes the conformation of the head with respect to the body. This Leifsonia xyli subsp. xyli (strain CTCB07) protein is Small ribosomal subunit protein uS5.